A 450-amino-acid chain; its full sequence is MKTVTEFQNKNILVLGIAKSGYAAATLLQKLGANVIVNDGKPLAENVLAAELQAKGMDVVCGGHPLELLERNISLVVKNPGIPYSNPILVAAKEKQIPIVTEVELAYRISEAPFVGITGSNGKTTTTMLTFEMLKEGQKHPVIAGNIGTVACEVAQDAKENEVVVTELSSFQLMGVELFQPKIAAFLNLFEAHLDYHGTKKEYGLAKANIFKNQTENDYSVINADDADVMALSAYSKGQKILFSTTKEIEDGACIKDNALYFKGEKVIEVSDIVLPGQHNLENILAAMSIAKLLGTSNEAITVVLKRFTGVKHRLEYVTTINNRKFYNDSKATNMLATEKALSAFTQPIVLLAGGLDRGNEFDDLIPYFKNVKAIVTFGQTAPKLVRAAEKAGLDIIESVDTLDEAVVKAYAHSKDGDVVLLSPACASWDQFKTFEERGDIFIQAVHKLI.

119–125 (GSNGKTT) serves as a coordination point for ATP.

The protein belongs to the MurCDEF family.

Its subcellular location is the cytoplasm. The enzyme catalyses UDP-N-acetyl-alpha-D-muramoyl-L-alanine + D-glutamate + ATP = UDP-N-acetyl-alpha-D-muramoyl-L-alanyl-D-glutamate + ADP + phosphate + H(+). It functions in the pathway cell wall biogenesis; peptidoglycan biosynthesis. Its function is as follows. Cell wall formation. Catalyzes the addition of glutamate to the nucleotide precursor UDP-N-acetylmuramoyl-L-alanine (UMA). The protein is UDP-N-acetylmuramoylalanine--D-glutamate ligase of Bacillus cereus (strain ATCC 14579 / DSM 31 / CCUG 7414 / JCM 2152 / NBRC 15305 / NCIMB 9373 / NCTC 2599 / NRRL B-3711).